We begin with the raw amino-acid sequence, 401 residues long: Argininosuccinate synthase (401 aa).

ATP-binding positions include 9-17 (AYSGGLDTS) and Ala-35. Tyr-86 serves as a coordination point for L-citrulline. Gly-116 serves as a coordination point for ATP. Residues Thr-118, Asn-122, and Asp-123 each contribute to the L-aspartate site. Residue Asn-122 coordinates L-citrulline. L-citrulline is bound by residues Arg-126, Ser-175, Ser-184, Glu-261, and Tyr-273.

It belongs to the argininosuccinate synthase family. Type 1 subfamily. In terms of assembly, homotetramer.

It localises to the cytoplasm. The enzyme catalyses L-citrulline + L-aspartate + ATP = 2-(N(omega)-L-arginino)succinate + AMP + diphosphate + H(+). Its pathway is amino-acid biosynthesis; L-arginine biosynthesis; L-arginine from L-ornithine and carbamoyl phosphate: step 2/3. The polypeptide is Argininosuccinate synthase (Aquifex aeolicus (strain VF5)).